The following is a 61-amino-acid chain: uncharacterized protein (61 aa).

This sequence belongs to the DUP/COS family.

This is an uncharacterized protein from Saccharomyces cerevisiae (strain ATCC 204508 / S288c) (Baker's yeast).